The following is a 101-amino-acid chain: Small ribosomal subunit protein uS14 (101 aa).

Belongs to the universal ribosomal protein uS14 family. In terms of assembly, part of the 30S ribosomal subunit. Contacts proteins S3 and S10.

In terms of biological role, binds 16S rRNA, required for the assembly of 30S particles and may also be responsible for determining the conformation of the 16S rRNA at the A site. This Klebsiella pneumoniae (strain 342) protein is Small ribosomal subunit protein uS14.